The primary structure comprises 635 residues: MAGUK p55 subfamily member 4 (635 aa).

Residues 1–16 (MRQSDRGAELTNEDRA) show a composition bias toward basic and acidic residues. The tract at residues 1–23 (MRQSDRGAELTNEDRALPTPPDP) is disordered. L27 domains are found at residues 23–79 (PENG…EKKL) and 86–136 (AQIL…FEPL). The 82-residue stretch at 153–234 (IVCLVKNQQP…TIMFKVIPVS (82 aa)) folds into the PDZ domain. Positions 241-311 (QKMVYVRAMI…PSNHLLKRKQ (71 aa)) constitute an SH3 domain. The 190-residue stretch at 426–615 (HRLIVLVGPS…ACGQLLSAIQ (190 aa)) folds into the Guanylate kinase-like domain. Residues 567-622 (VDMKFKDEDLQEMEELAQKMESQFGQFFDHVIVNDNLQDACGQLLSAIQKAQEELQ) are a coiled coil.

Belongs to the MAGUK family. As to quaternary structure, may interact with GRIA2. Interacts with MPDZ. Forms a complex with CRB1 and PALS1. Interacts with FASLG. Detected in the retina (at protein level). Highly enriched in the retina where it is mainly expressed by rod photoreceptors; detected in the inner segment of the photoreceptor layer and in the outer nuclear layer. Also detected at much lower levels in pineal gland, cerebellum, cortex, hippocampus, olfactory bulb, heart, liver and spleen. Expressed in the CA1-CA3 regions of pyramidal cell layers and in the granule cell layer of dentate gyrus in the hippocampus. In the cerebellum, expressed in Purkinje cells and throughout the granule cell layer. In the olfactory bulb, expressed in mitral cells.

The protein resides in the cytoplasm. Functionally, may play a role in retinal photoreceptors development. This Mus musculus (Mouse) protein is MAGUK p55 subfamily member 4 (Mpp4).